Reading from the N-terminus, the 443-residue chain is MQEDLELGNQNFPMVLVQIPMYNEREVFKLSIGAACRLIWPLDRLIVQVLDDSTDPTIMEMVSTECGKWATKGINIKCERRDNRNGYKAGALKQGMRHSYVKTCTYIAIFDADFQPEPDYLERTVPFLIHNPELALVQARWKFVNAKKCLMTRMQEMSLNYHFTAEQESGSTRHAFFGFNGTAGVWRLAAMEEAGGWKDRTTVEDMDLAVRVGLHGWKFVFVNDVSVKSELPSQFKAFRFQQHRWSCGPANLFRKMTMEIIRNKRVTIWKKLYVIYSFFFVRKIIVHFFTFFFYCFILPTSVFFPEVNIPTWSTVYFPFMITLFNAIATPRSFYLVIFWVLFENVMAMHRTKGTFIGLLEGGRVNEWVVTEKLGDALETKLLPQVRKPRNGFLERINSKEMMVGIYILCCASYNLVFGKTVLYIYLYMQALAFIIAGIGFIGT.

Asp-52 is an active-site residue. Substrate-binding residues include Asp-111 and Asp-113. Asp-205 is a catalytic residue. 4 consecutive transmembrane segments (helical) span residues 284–304, 321–341, 400–420, and 421–441; these read IIVHFFTFFFYCFILPTSVFF, ITLFNAIATPRSFYLVIFWVL, EMMVGIYILCCASYNLVFGKT, and VLYIYLYMQALAFIIAGIGFI.

It belongs to the glycosyltransferase 2 family. Plant cellulose synthase-like A subfamily.

It localises to the golgi apparatus membrane. It carries out the reaction GDP-mannose + (glucomannan)n = GDP + (glucomannan)n+1.. In terms of biological role, probable mannan synthase which consists of a 4-beta-mannosyltransferase activity on mannan using GDP-mannose. The beta-1,4-mannan product is the backbone for galactomannan synthesis by galactomannan galactosyltransferase. Galactomannan is a noncellulosic polysaccharides of plant cell wall. This Arabidopsis thaliana (Mouse-ear cress) protein is Probable glucomannan 4-beta-mannosyltransferase 11.